The chain runs to 107 residues: Potassium voltage-gated channel subfamily E member 3 (107 aa).

N-linked (GlcNAc...) asparagine glycans are attached at residues N5, N22, and N45. The segment at 31–54 (CRPGPGPGSGTGPDNQTEDHRASL) is disordered. Residues 61–81 (SYMYILFVMFLFAVTVGSLIL) form a helical membrane-spanning segment. The interaction with KCNQ1 stretch occupies residues 72–83 (FAVTVGSLILGY). The Cytoplasmic segment spans residues 82–103 (GYTRSRKVDKRSDPYHVYIKNR).

This sequence belongs to the potassium channel KCNE family. In terms of assembly, interacts with KCNB1. Interacts with KCNC2. Associates with KCNC4/Kv3.4. Interacts with KCNQ1; associates with a KCNQ1:KCNE3 stoichiometry of 4:4; produces a current with nearly instantaneous activation with a linear current-voltage relationship and alters membrane raft localization; affects KCNQ1 structure and gating properties.

The protein localises to the cell membrane. The protein resides in the cytoplasm. It localises to the perikaryon. It is found in the cell projection. Its subcellular location is the dendrite. The protein localises to the membrane raft. Ancillary protein that functions as a regulatory subunit of the voltage-gated potassium (Kv) channel complex composed of pore-forming and potassium-conducting alpha subunits and of regulatory beta subunits. KCNE3 beta subunit modulates the gating kinetics and enhances stability of the channel complex. Alters the gating of the delayed rectifier Kv channel containing KCNB1 alpha subunit. Associates with KCNC4/Kv3.4 alpha subunit to form the subthreshold Kv channel in skeletal muscle and to establish the resting membrane potential (RMP) in muscle cells. Association with KCNQ1/KCLQT1 alpha subunit may form the intestinal cAMP-stimulated potassium channel involved in chloride secretion that produces a current with nearly instantaneous activation with a linear current-voltage relationship. The chain is Potassium voltage-gated channel subfamily E member 3 from Rattus norvegicus (Rat).